The chain runs to 357 residues: Poly(3-hydroxyalkanoate) polymerase subunit PhaE (357 aa).

The segment at 320-357 (AALAGEEPATKPATALRSPAPAAKAPARRRTTKTNPAD) is disordered. Low complexity predominate over residues 331 to 344 (PATALRSPAPAAKA).

Belongs to the PHA/PHB synthase family. Type III PhaE subfamily. A large complex of PhaC and PhaE; the ratio of the subunits has been estimated to be from 1:1 to 4:1, with more PhaE than PhaC.

The protein resides in the cytoplasm. It functions in the pathway biopolymer metabolism; poly-(R)-3-hydroxybutanoate biosynthesis. Polymerizes D(-)-3-hydroxybutyryl-CoA to create polyhydroxybutyrate (PHB) which consists of thousands of hydroxybutyrate molecules linked end to end. This subunit has no catalytic activity but enhances the activity of PhaC, the catalytic subunit, 100-fold. The protein is Poly(3-hydroxyalkanoate) polymerase subunit PhaE of Allochromatium vinosum (strain ATCC 17899 / DSM 180 / NBRC 103801 / NCIMB 10441 / D) (Chromatium vinosum).